The primary structure comprises 340 residues: CMP-N-acetylneuraminate-beta-galactosamide-alpha-2,3-sialyltransferase 1 (340 aa).

Over M1–T13 the chain is Cytoplasmic. A helical; Signal-anchor for type II membrane protein transmembrane segment spans residues F14–A34. Topologically, residues T35–R340 are lumenal. 3 cysteine pairs are disulfide-bonded: C59-C64, C61-C139, and C142-C281. An N-linked (GlcNAc...) asparagine glycan is attached at N79. Position 105 (Q105) interacts with substrate. The N-linked (GlcNAc...) asparagine glycan is linked to N114. Residues N147 and N170 each coordinate substrate. N-linked (GlcNAc...) asparagine glycosylation is present at N201. 6 residues coordinate substrate: Y230, Y266, G270, G290, H299, and H316. N-linked (GlcNAc...) asparagine glycosylation occurs at N323.

It belongs to the glycosyltransferase 29 family. Post-translationally, the soluble form derives from the membrane form by proteolytic processing.

It localises to the golgi apparatus. The protein localises to the golgi stack membrane. The protein resides in the trans-Golgi network membrane. Its subcellular location is the secreted. The enzyme catalyses a beta-D-galactosyl-(1-&gt;3)-N-acetyl-alpha-D-galactosaminyl derivative + CMP-N-acetyl-beta-neuraminate = an N-acetyl-alpha-neuraminyl-(2-&gt;3)-beta-D-galactosyl-(1-&gt;3)-N-acetyl-alpha-D-galactosaminyl derivative + CMP + H(+). It carries out the reaction a ganglioside GM1 + CMP-N-acetyl-beta-neuraminate = a ganglioside GD1a + CMP + H(+). The catalysed reaction is a ganglioside GM1 (d18:1(4E)) + CMP-N-acetyl-beta-neuraminate = a ganglioside GD1a (d18:1(4E)) + CMP + H(+). It catalyses the reaction ganglioside GM1 (d18:1(4E)/18:0) + CMP-N-acetyl-beta-neuraminate = ganglioside GD1a (18:1(4E)/18:0) + CMP + H(+). The enzyme catalyses a ganglioside GA1 + CMP-N-acetyl-beta-neuraminate = a ganglioside GM1b + CMP + H(+). It carries out the reaction a ganglioside GA1 (d18:1(4E)) + CMP-N-acetyl-beta-neuraminate = a ganglioside GM1b (d18:1(4E)) + CMP + H(+). The catalysed reaction is a ganglioside GD1b + CMP-N-acetyl-beta-neuraminate = a ganglioside GT1b + CMP + H(+). It catalyses the reaction a 3-O-[beta-D-galactosyl-(1-&gt;3)-N-acetyl-alpha-D-galactosaminyl]-L-threonyl-[protein] + CMP-N-acetyl-beta-neuraminate = a 3-O-[N-acetyl-alpha-neuraminyl-(2-&gt;3)-beta-D-galactosyl-(1-&gt;3)-N-acetyl-alpha-D-galactosaminyl]-L-threonyl-[protein] + CMP + H(+). The enzyme catalyses a 3-O-[beta-D-galactosyl-(1-&gt;3)-N-acetyl-alpha-D-galactosaminyl]-L-seryl-[protein] + CMP-N-acetyl-beta-neuraminate = 3-O-[N-acetyl-alpha-neuraminyl-(2-&gt;3)-beta-D-galactosyl-(1-&gt;3)-N-acetyl-alpha-D-galactosaminyl]-L-seryl-[protein] + CMP + H(+). It participates in protein modification; protein glycosylation. The protein operates within glycolipid biosynthesis. A beta-galactoside alpha2-&gt;3 sialyltransferase involved in terminal sialylation of glycoproteins and glycolipids. Catalyzes the transfer of sialic acid (N-acetyl-neuraminic acid; Neu5Ac) from the nucleotide sugar donor CMP-Neu5Ac onto acceptor Galbeta-(1-&gt;3)-GalNAc-terminated glycoconjugates through an alpha2-3 linkage. Adds sialic acid to the core 1 O-glycan, Galbeta-(1-&gt;3)-GalNAc-O-Ser/Thr, which is a major structure of mucin-type O-glycans. As part of a homeostatic mechanism that regulates CD8-positive T cell numbers, sialylates core 1 O-glycans of T cell glycoproteins, SPN/CD43 and PTPRC/CD45. Prevents premature apoptosis of thymic CD8-positive T cells prior to peripheral emigration, whereas in the secondary lymphoid organs controls the survival of CD8-positive memory T cells generated following a successful immune response. Transfers sialic acid to asialofetuin, presumably onto Galbeta-(1-&gt;3)-GalNAc-O-Ser. Sialylates GM1a, GA1 and GD1b gangliosides to form GD1a, GM1b and GT1b, respectively. The sequence is that of CMP-N-acetylneuraminate-beta-galactosamide-alpha-2,3-sialyltransferase 1 (ST3GAL1) from Pan troglodytes (Chimpanzee).